The chain runs to 429 residues: WRKY transcription factor 44 (429 aa).

A DNA-binding region (WRKY 1) is located at residues 159 to 223; it reads TGDRSSVDGY…YQGEHNHSKP (65 aa). Residues Cys190, Cys195, His218, and His220 each contribute to the Zn(2+) site. Disordered stretches follow at residues 214–279 and 292–348; these read YQGE…RTEK and AVPR…SDSL. 3 stretches are compositionally biased toward polar residues: residues 254-275, 295-313, and 334-345; these read QDPN…STQN, RSTN…SSQC, and SEAGVSQGSVES. Residues 343 to 408 constitute a DNA-binding region (WRKY 2); it reads VESDSLEDGF…YEGKHNHHLL (66 aa). Residues Cys374, Cys379, His403, and His405 each coordinate Zn(2+). The segment covering 410 to 422 has biased composition (low complexity); the sequence is SPPSSSTLPFNSP. Residues 410 to 429 are disordered; it reads SPPSSSTLPFNSPQLSKQTI.

It belongs to the WRKY group I family. As to expression, leaf promordia, trichomes, atrichoblasts, fertilized eggs, seed coat.

It is found in the nucleus. Transcription factor. Interacts specifically with the W box (5'-(T)TGAC[CT]-3'), a frequently occurring elicitor-responsive cis-acting element. Regulates trichome development, production of mucilage and tannin in seed coats, and maybe root hair development. In Arabidopsis thaliana (Mouse-ear cress), this protein is WRKY transcription factor 44 (WRKY44).